An 88-amino-acid polypeptide reads, in one-letter code: Sec-independent protein translocase protein TatA (88 aa).

The chain crosses the membrane as a helical span at residues 1–21; sequence MGSIGWAQLLIIAVIVVLLFG. The disordered stretch occupies residues 41 to 88; it reads KAMGDDSQTPPTNVDKTSNDADFAKSITEKQQPVAKAEESKSHEKEQG. Residues 46 to 56 show a composition bias toward polar residues; that stretch reads DSQTPPTNVDK. Residues 76–88 are compositionally biased toward basic and acidic residues; it reads KAEESKSHEKEQG.

It belongs to the TatA/E family. The Tat system comprises two distinct complexes: a TatABC complex, containing multiple copies of TatA, TatB and TatC subunits, and a separate TatA complex, containing only TatA subunits. Substrates initially bind to the TatABC complex, which probably triggers association of the separate TatA complex to form the active translocon.

The protein resides in the cell inner membrane. Functionally, part of the twin-arginine translocation (Tat) system that transports large folded proteins containing a characteristic twin-arginine motif in their signal peptide across membranes. TatA could form the protein-conducting channel of the Tat system. The sequence is that of Sec-independent protein translocase protein TatA from Yersinia pestis.